Here is a 109-residue protein sequence, read N- to C-terminus: Nucleoid-associated protein VV1_2004 (109 aa).

This sequence belongs to the YbaB/EbfC family. In terms of assembly, homodimer.

It localises to the cytoplasm. The protein localises to the nucleoid. Functionally, binds to DNA and alters its conformation. May be involved in regulation of gene expression, nucleoid organization and DNA protection. The sequence is that of Nucleoid-associated protein VV1_2004 from Vibrio vulnificus (strain CMCP6).